The following is a 503-amino-acid chain: Probable Xaa-Pro aminopeptidase TSTA_094700 (503 aa).

Positions 277, 288, 428, and 467 each coordinate Mn(2+).

This sequence belongs to the peptidase M24B family. It depends on Mn(2+) as a cofactor.

The enzyme catalyses Release of any N-terminal amino acid, including proline, that is linked to proline, even from a dipeptide or tripeptide.. Its function is as follows. Catalyzes the removal of a penultimate prolyl residue from the N-termini of peptides. The protein is Probable Xaa-Pro aminopeptidase TSTA_094700 of Talaromyces stipitatus (strain ATCC 10500 / CBS 375.48 / QM 6759 / NRRL 1006) (Penicillium stipitatum).